Here is a 186-residue protein sequence, read N- to C-terminus: Ribosome rescue factor SmrB (186 aa).

The 76-residue stretch at 99–174 folds into the Smr domain; sequence IDLHGLTQHQ…SDAAIIVIIE (76 aa).

Belongs to the SmrB family. Associates with collided ribosomes, but not with correctly translating polysomes.

Its function is as follows. Acts as a ribosome collision sensor. Detects stalled/collided disomes (pairs of ribosomes where the leading ribosome is stalled and a second ribosome has collided with it) and endonucleolytically cleaves mRNA at the 5' boundary of the stalled ribosome. Stalled/collided disomes form a new interface (primarily via the 30S subunits) that binds SmrB. Cleaved mRNA becomes available for tmRNA ligation, leading to ribosomal subunit dissociation and rescue of stalled ribosomes. This Buchnera aphidicola subsp. Acyrthosiphon pisum (strain Tuc7) protein is Ribosome rescue factor SmrB.